The sequence spans 227 residues: Ribose-5-phosphate isomerase A (227 aa).

Substrate is bound by residues 28–31 (TGST), 81–84 (DGAD), and 94–97 (KGGG). Glu-103 (proton acceptor) is an active-site residue. Substrate is bound at residue Lys-121.

The protein belongs to the ribose 5-phosphate isomerase family. As to quaternary structure, homodimer.

The catalysed reaction is aldehydo-D-ribose 5-phosphate = D-ribulose 5-phosphate. The protein operates within carbohydrate degradation; pentose phosphate pathway; D-ribose 5-phosphate from D-ribulose 5-phosphate (non-oxidative stage): step 1/1. In terms of biological role, catalyzes the reversible conversion of ribose-5-phosphate to ribulose 5-phosphate. In Caulobacter vibrioides (strain ATCC 19089 / CIP 103742 / CB 15) (Caulobacter crescentus), this protein is Ribose-5-phosphate isomerase A.